The sequence spans 131 residues: Hyastatin (131 aa).

An N-terminal signal peptide occupies residues 1–16 (MRVLLILVSLAALAHA). Intrachain disulfides connect C103–C117, C107–C124, and C118–C125. K130 carries the post-translational modification Lysine amide.

In terms of tissue distribution, strongly expressed in hemocytes, with weaker expression in gills and epidermis. Expressed at low levels in hepatopancreas.

Its subcellular location is the cytoplasmic granule. Functionally, antimicrobial peptide. Has strong antibacterial activity against the Gram-positive bacterium C.glutamicum (MIC=0.4 uM) and the Gram-negative bacterium E.coli (MIC=12.5 uM). Has weak antibacterial activity against the Gram-positive bacterium S.aureus (MIC&gt;50 uM) and the Gram-negative bacterium P.aeruginosa (MIC&gt;50 uM). Has antifungal activity against S.cerevisiae (MIC=12.5) and C.albicans (MIC=6.3 uM). Has weak antifungal activity against the mold B.cinerea. Presents chitin-binding activity. In Hyas araneus (Atlantic lyre crab), this protein is Hyastatin.